The primary structure comprises 391 residues: Serpin-ZX (391 aa).

Positions Gly-337–Asp-361 are RCL. Asn-375 is a glycosylation site (N-linked (GlcNAc...) asparagine).

It belongs to the serpin family. Interacts with RD21A. In terms of tissue distribution, expressed in root tips. Expressed in siliques (at protein level).

Its subcellular location is the secreted. The protein resides in the extracellular space. It is found in the apoplast. It localises to the cytoplasm. Functionally, inhibits metacaspase-9 (MC9) cysteine protease. Functions through cleavage of its reactive center loop and covalent binding to MC9. Involved in the control of elicitor-stimulated programmed cell death (PCD). During infection by the necrotrophic fungal pathogen Botrytis cinerea, functions to protect cells by limiting the PCD-promoting protease RD21A activity that is released from the ER body or vacuole to the cytoplasm. Involved in the control of water stress-induced cell death by limiting the pro-death protease RD21A activity that is released from the vacuole to the cytoplasm. This is Serpin-ZX from Arabidopsis thaliana (Mouse-ear cress).